The following is a 494-amino-acid chain: MFS-type transporter lnaF (494 aa).

Positions 1-51 (MTYDPENAMGEARADAPVEAEKEHEATQTTVKESTLGYDNSSDPSRRDSYR) are disordered. The span at 12-26 (ARADAPVEAEKEHEA) shows a compositional bias: basic and acidic residues. N-linked (GlcNAc...) asparagine glycans are attached at residues N40, N58, and N68. A run of 10 helical transmembrane segments spans residues 105-125 (SLLIGAILGVLALGYTSDMFS), 128-148 (AGLLFTSGLVAIGTLMSTLAL), 156-176 (MLWYFVIVRGIAGFGVGGEYP), 203-223 (TLMATSAAPIQMIVYLICLIA), 228-248 (LPVTFHAIYSIATILPVIIMV), 290-310 (LAFFLYDFINFPNSIMSSTII), 323-343 (AIWQVILGALPVPGVIVGAWL), 354-374 (ILGFAGYMVLGFVIGGTFPHL), 383-403 (VLYGLLQALGHMGPGATIGLI), and 446-466 (STFYLAGGIAILGMIVYWFLP).

It belongs to the major facilitator superfamily. Sugar transporter (TC 2.A.1.1) family.

The protein localises to the cell membrane. In terms of biological role, MFS-type transporter; part of the lna gene cluster that mediates the biosynthesis of diastereomeric piperazines. Lna and lnb clusters encode sets of enzymes that produce overlapping sets of previously undescribed metabolites such as piperazinomycin-like metabolites or morpholine. The lna and lnb biosynthetic pathways appear to be part of a signaling network that controls the formation of sclerotia, a resilient overwintering structure. May be involved in the secretion of the metabolites produced by the lna and lnb clusters. The chain is MFS-type transporter lnaF from Aspergillus flavus (strain ATCC 200026 / FGSC A1120 / IAM 13836 / NRRL 3357 / JCM 12722 / SRRC 167).